Consider the following 444-residue polypeptide: C4-dicarboxylate transport protein (444 aa).

Transmembrane regions (helical) follow at residues 15–35 (VIVA…FGVA), 46–66 (LIKM…IAGM), 78–98 (YALL…LIVV), 143–163 (IVGA…VIFG), 199–219 (PIGA…GSLV), 224–244 (LMIC…GGIA), 291–311 (VVGL…AIYL), 332–352 (ITLL…TGSG), and 354–374 (IVLA…LALI). The segment at 422–444 (GIADTRPEDDLGVAEGPTPSNVK) is disordered.

It belongs to the dicarboxylate/amino acid:cation symporter (DAACS) (TC 2.A.23) family.

It is found in the cell inner membrane. Functionally, responsible for the transport of dicarboxylates such as succinate, fumarate, and malate from the periplasm across the membrane. This Pseudomonas fluorescens (strain Pf0-1) protein is C4-dicarboxylate transport protein.